Consider the following 319-residue polypeptide: Cytochrome c biogenesis protein CcsA (319 aa).

The next 7 membrane-spanning stretches (helical) occupy residues Ile-9–Leu-29, Gly-44–Gly-64, Leu-71–Phe-91, Met-143–Ile-163, Ile-225–Asn-245, Thr-259–His-273, and Ala-286–Leu-306.

Belongs to the CcmF/CycK/Ccl1/NrfE/CcsA family. As to quaternary structure, may interact with Ccs1.

The protein localises to the plastid. Its subcellular location is the chloroplast thylakoid membrane. Functionally, required during biogenesis of c-type cytochromes (cytochrome c6 and cytochrome f) at the step of heme attachment. The chain is Cytochrome c biogenesis protein CcsA from Oenothera glazioviana (Large-flowered evening primrose).